Reading from the N-terminus, the 197-residue chain is Peptidyl-tRNA hydrolase (197 aa).

Tyr18 is a binding site for tRNA. His23 functions as the Proton acceptor in the catalytic mechanism. TRNA-binding residues include Phe69, Asn71, and Asn117.

Belongs to the PTH family. In terms of assembly, monomer.

The protein resides in the cytoplasm. The catalysed reaction is an N-acyl-L-alpha-aminoacyl-tRNA + H2O = an N-acyl-L-amino acid + a tRNA + H(+). Functionally, hydrolyzes ribosome-free peptidyl-tRNAs (with 1 or more amino acids incorporated), which drop off the ribosome during protein synthesis, or as a result of ribosome stalling. Its function is as follows. Catalyzes the release of premature peptidyl moieties from peptidyl-tRNA molecules trapped in stalled 50S ribosomal subunits, and thus maintains levels of free tRNAs and 50S ribosomes. The sequence is that of Peptidyl-tRNA hydrolase from Psychromonas ingrahamii (strain DSM 17664 / CCUG 51855 / 37).